We begin with the raw amino-acid sequence, 216 residues long: Cytochrome c oxidase subunit 2 (216 aa).

The Mitochondrial intermembrane portion of the chain corresponds to Leu-1–Ser-8. A helical transmembrane segment spans residues Pro-9–Met-39. Residues Leu-40–Gln-53 are Mitochondrial matrix-facing. The chain crosses the membrane as a helical span at residues Glu-54 to Thr-81. Topologically, residues Asp-82 to Trp-216 are mitochondrial intermembrane. His-155, Cys-190, Glu-192, Cys-194, His-198, and Met-201 together coordinate Cu cation. Glu-192 contributes to the Mg(2+) binding site.

It belongs to the cytochrome c oxidase subunit 2 family. In terms of assembly, component of the cytochrome c oxidase (complex IV, CIV), a multisubunit enzyme composed of 14 subunits. The complex is composed of a catalytic core of 3 subunits MT-CO1, MT-CO2 and MT-CO3, encoded in the mitochondrial DNA, and 11 supernumerary subunits COX4I, COX5A, COX5B, COX6A, COX6B, COX6C, COX7A, COX7B, COX7C, COX8 and NDUFA4, which are encoded in the nuclear genome. The complex exists as a monomer or a dimer and forms supercomplexes (SCs) in the inner mitochondrial membrane with NADH-ubiquinone oxidoreductase (complex I, CI) and ubiquinol-cytochrome c oxidoreductase (cytochrome b-c1 complex, complex III, CIII), resulting in different assemblies (supercomplex SCI(1)III(2)IV(1) and megacomplex MCI(2)III(2)IV(2)). Found in a complex with TMEM177, COA6, COX18, COX20, SCO1 and SCO2. Interacts with TMEM177 in a COX20-dependent manner. Interacts with COX20. Interacts with COX16. Requires Cu cation as cofactor.

It localises to the mitochondrion inner membrane. It carries out the reaction 4 Fe(II)-[cytochrome c] + O2 + 8 H(+)(in) = 4 Fe(III)-[cytochrome c] + 2 H2O + 4 H(+)(out). Component of the cytochrome c oxidase, the last enzyme in the mitochondrial electron transport chain which drives oxidative phosphorylation. The respiratory chain contains 3 multisubunit complexes succinate dehydrogenase (complex II, CII), ubiquinol-cytochrome c oxidoreductase (cytochrome b-c1 complex, complex III, CIII) and cytochrome c oxidase (complex IV, CIV), that cooperate to transfer electrons derived from NADH and succinate to molecular oxygen, creating an electrochemical gradient over the inner membrane that drives transmembrane transport and the ATP synthase. Cytochrome c oxidase is the component of the respiratory chain that catalyzes the reduction of oxygen to water. Electrons originating from reduced cytochrome c in the intermembrane space (IMS) are transferred via the dinuclear copper A center (CU(A)) of subunit 2 and heme A of subunit 1 to the active site in subunit 1, a binuclear center (BNC) formed by heme A3 and copper B (CU(B)). The BNC reduces molecular oxygen to 2 water molecules using 4 electrons from cytochrome c in the IMS and 4 protons from the mitochondrial matrix. The protein is Cytochrome c oxidase subunit 2 (MT-CO2) of Callimico goeldii (Goeldi's marmoset).